Here is an 811-residue protein sequence, read N- to C-terminus: Zinc finger CCCH domain-containing protein 11A (811 aa).

3 consecutive C3H1-type zinc fingers follow at residues 2–30 (PNQG…HCEA), 32–58 (LGNE…HMEI), and 61–87 (KRSE…HHNR). Position 109 is a phosphoserine (Ser109). Residues Lys115 and Lys125 each participate in a glycyl lysine isopeptide (Lys-Gly) (interchain with G-Cter in SUMO2) cross-link. Ser133 carries the post-translational modification Phosphoserine. Disordered stretches follow at residues 140-195 (MKVE…GLRV), 224-258 (KKMK…KENV), 286-352 (GKRK…EKVN), and 368-434 (ERAS…TCIK). Lys141 participates in a covalent cross-link: Glycyl lysine isopeptide (Lys-Gly) (interchain with G-Cter in SUMO2). 2 positions are modified to phosphoserine: Ser150 and Ser172. Residues 161-176 (ADDDEDDDDQFSEEGD) show a composition bias toward acidic residues. At Ser291 the chain carries Phosphoserine. 2 stretches are compositionally biased toward basic and acidic residues: residues 310–323 (KKVE…DKTP) and 368–391 (ERAS…KTDD). At Thr322 the chain carries Phosphothreonine. The stretch at 363–424 (EEILLERASQ…KHRQQEAERQ (62 aa)) forms a coiled coil. At Ser371 the chain carries Phosphoserine. The segment covering 392-403 (STSGARSSSTIR) has biased composition (polar residues). The segment covering 418–434 (QQEAERQKSKKDTTCIK) has biased composition (basic and acidic residues). Residue Lys479 forms a Glycyl lysine isopeptide (Lys-Gly) (interchain with G-Cter in SUMO2) linkage. A disordered region spans residues 483–550 (ALRVQQSSES…KEASGETTGV (68 aa)). Residues 487–499 (QQSSESSTSSPSQ) are compositionally biased toward low complexity. Lys620 is covalently cross-linked (Glycyl lysine isopeptide (Lys-Gly) (interchain with G-Cter in SUMO2)). The disordered stretch occupies residues 716–769 (TVPEAENPRDSLVLPPTQSSSDSSPPEVSGPSSSQMSMKTRRLSSASTGKPQLS). Positions 730–749 (PPTQSSSDSSPPEVSGPSSS) are enriched in low complexity. Over residues 750–766 (QMSMKTRRLSSASTGKP) the composition is skewed to polar residues.

Interacts with TREX complex components THOC2, DDX39 and POLDIP3; the interactions are ATP-dependent. Interacts with PABPN1; this interaction retains ZC3H11A in nuclear speckles. Interacts with KPNA3.

It is found in the nucleus speckle. Its function is as follows. Through its association with TREX complex components, may participate in the export and post-transcriptional coordination of selected mRNA transcripts, including those required to maintain the metabolic processes in embryonic cells. Binds RNA. The protein is Zinc finger CCCH domain-containing protein 11A (ZC3H11A) of Pongo abelii (Sumatran orangutan).